A 211-amino-acid polypeptide reads, in one-letter code: Dephospho-CoA kinase (211 aa).

The 205-residue stretch at 7–211 (LIGVIGRSGA…ILTRRGVLGE (205 aa)) folds into the DPCK domain. 15–20 (GAGKNV) provides a ligand contact to ATP.

The protein belongs to the CoaE family.

It is found in the cytoplasm. The enzyme catalyses 3'-dephospho-CoA + ATP = ADP + CoA + H(+). Its pathway is cofactor biosynthesis; coenzyme A biosynthesis; CoA from (R)-pantothenate: step 5/5. Catalyzes the phosphorylation of the 3'-hydroxyl group of dephosphocoenzyme A to form coenzyme A. This Treponema pallidum (strain Nichols) protein is Dephospho-CoA kinase.